The following is an 803-amino-acid chain: Xylosyltransferase sqv-6 (803 aa).

The Cytoplasmic segment spans residues V3–H13. Residues Y14–N34 traverse the membrane as a helical; Signal-anchor for type II membrane protein segment. The Lumenal portion of the chain corresponds to S35–R803. A disulfide bridge connects residues C63 and C91. 3 N-linked (GlcNAc...) asparagine glycosylation sites follow: N95, N175, and N224. 3 disulfides stabilise this stretch: C107-C446, C465-C479, and C467-C477. The WSC domain maps to I115–D209. Residues D265 and T294 to W296 each bind UDP-alpha-D-xylose. N-linked (GlcNAc...) asparagine glycosylation is present at N326. Position 399 to 400 (D399 to W400) interacts with UDP-alpha-D-xylose. UDP-alpha-D-xylose is bound by residues S480 and R506–K507. N615 and N718 each carry an N-linked (GlcNAc...) asparagine glycan. Cysteines 769 and 775 form a disulfide.

It belongs to the glycosyltransferase 14 family. XylT subfamily. A divalent metal cation serves as cofactor.

Its subcellular location is the endoplasmic reticulum membrane. It localises to the golgi apparatus membrane. It catalyses the reaction UDP-alpha-D-xylose + L-seryl-[protein] = 3-O-(beta-D-xylosyl)-L-seryl-[protein] + UDP + H(+). Its pathway is glycan metabolism; chondroitin sulfate biosynthesis. It participates in glycan metabolism; heparan sulfate biosynthesis. Catalyzes the first step in biosynthesis of glycosaminoglycan. Transfers D-xylose from UDP-D-xylose to specific serine residues of the core protein. The polypeptide is Xylosyltransferase sqv-6 (Caenorhabditis briggsae).